Consider the following 171-residue polypeptide: Protein X (171 aa).

A run of 3 helical transmembrane segments spans residues 11–31 (SWYQIFIAFSLTYTPIAIYSL), 38–58 (LAGIVNIFIFINCCVSFVYLM), and 73–93 (AVIALVWGIYTLVKIVDWLVI).

It localises to the virion membrane. The polypeptide is Protein X (VPX) (Mus musculus domesticus (western European house mouse)).